The chain runs to 474 residues: Transcription factor SOX-4 (474 aa).

Polar residues predominate over residues 1–10 (MVQQTNNAEN). The tract at residues 1 to 58 (MVQQTNNAENTEALLAGESSDSGAGLELGIASSPTPGSTASTGGKADDPSWCKTPSGH) is disordered. Positions 31 to 44 (ASSPTPGSTASTGG) are enriched in low complexity. Positions 59-127 (IKRPMNAFMV…KHMADYPDYK (69 aa)) form a DNA-binding region, HMG box. K95 carries the N6-acetyllysine modification. Disordered stretches follow at residues 128-228 (YRPR…GGGK), 262-286 (ARTPSASASASSAASASAALAAPGK), and 302-416 (LGTS…NFES). The span at 138 to 149 (NANSSSSAAASS) shows a compositional bias: low complexity. Residues 158 to 189 (VGGSGGGGHGGGGGGGSSNAGGGGGGASGGGA) are compositionally biased toward gly residues. 4 stretches are compositionally biased toward low complexity: residues 266-283 (SASASASSAASASAALAA), 304-320 (TSSSPVGGVGAGADPSD), 336-354 (APSLSGRSSAASSPAAGRS), and 366-396 (AASPAPSSAPSHASSSASSHSSSSSSSGSSS). Over residues 397–406 (SDDEFEDDLL) the composition is skewed to acidic residues. Positions 407–416 (DLNPSSNFES) are enriched in low complexity. The 9aaTAD motif lies at 426-434 (SALDRDLDF).

As to quaternary structure, interacts with UBE2I. Interacts with HDAC1; interaction inhibits the transcriptional activator activity. In terms of processing, acetylation at Lys-95 by KAT5 promotes the transcription activator activity and is required during myoblast differentiation. Acetylation by KAT5 abolishes the interaction between SOX4 and HDAC1 and switches SOX4 into a transcriptional activator. As to expression, testis, brain, and heart.

The protein resides in the nucleus. In terms of biological role, transcriptional activator that binds with high affinity to the T-cell enhancer motif 5'-AACAAAG-3' motif. Required for IL17A-producing Vgamma2-positive gamma-delta T-cell maturation and development, via binding to regulator loci of RORC to modulate expression. Involved in skeletal myoblast differentiation by promoting gene expression of CALD1. In Homo sapiens (Human), this protein is Transcription factor SOX-4.